A 255-amino-acid polypeptide reads, in one-letter code: 4-diphosphocytidyl-2-C-methyl-D-erythritol kinase (255 aa).

Lys-6 is an active-site residue. 95-105 serves as a coordination point for ATP; that stretch reads PVCAGLGGGSS. Asp-137 is an active-site residue.

It belongs to the GHMP kinase family. IspE subfamily.

The enzyme catalyses 4-CDP-2-C-methyl-D-erythritol + ATP = 4-CDP-2-C-methyl-D-erythritol 2-phosphate + ADP + H(+). Its pathway is isoprenoid biosynthesis; isopentenyl diphosphate biosynthesis via DXP pathway; isopentenyl diphosphate from 1-deoxy-D-xylulose 5-phosphate: step 3/6. Its function is as follows. Catalyzes the phosphorylation of the position 2 hydroxy group of 4-diphosphocytidyl-2C-methyl-D-erythritol. This Campylobacter jejuni subsp. jejuni serotype O:6 (strain 81116 / NCTC 11828) protein is 4-diphosphocytidyl-2-C-methyl-D-erythritol kinase.